Reading from the N-terminus, the 226-residue chain is MLLHIPEVLNGQELATLRETLAGADWQDGAATAGAQAVRVKQNLQLPAGAPDARPMGELVKAALLRHPLFQSAALPHTVLTPRFNRYEGGGHYGNHVDSAIHADPFLGVSVRTDVSTTVFLNDPEDYDGGELIVEDTYGVHEVKLPAGDAILYPATSLHRVESVTRGTRLASFLWTQSRVRDDARRGMLFQLDMTILSLRGKLADAPEVVALTGHYHNLLRQWADA.

A Fe2OG dioxygenase domain is found at 78–178 (TVLTPRFNRY…RLASFLWTQS (101 aa)). Positions 96, 98, and 159 each coordinate Fe cation. R169 lines the 2-oxoglutarate pocket.

Fe(2+) serves as cofactor. Requires L-ascorbate as cofactor.

This Hyphomonas neptunium (strain ATCC 15444) protein is PKHD-type hydroxylase HNE_2117.